Consider the following 530-residue polypeptide: MSVDTYTETTKIDKLLKKPTSHFQLSTTQLYNKILDNNEGVLTELGAVNASTGKYTGRSPKDKFFVSEPSYRDNIDWGEINQPIDEETFLKLYHKVLDYLDKKDELYVFKGYAGSDKDTMLKLTVINELAWHNLFAKNMFIRPESKEEATKIKPNFTIVSAPHFKADPEVDGTKSETFVIISFKHKVILIGGTEYAGEMKKGIFSVMNYLLPMQDIMSMHCSANVGEKGDVALFFGLSGTGKTTLSADPHRKLIGDDEHGWNKNGVFNIEGGCYAKAINLSKEKEPQIFDAIKYGAILENTVVAEDGSVDFEDNRYTENTRAAYPINHIDNIVVPSKAAHPNTIIFLTADAFGVIPPISKLNKDQAMYHFLSGFTSKLAGTERGVTEPEPSFSTCFGAPFFPLHPTVYADLLGELIDLHDVDVYLVNTGWTGGKYGVGRRISLHYTRQMVNQAISGKLKNAEYTKDSTFGLSIPVEIEDVPKTILNPINAWSDKEKYKTQAEDLIQRFEKNFEKFGEKVEHIAEKGSFNK.

Positions 58, 195, and 201 each coordinate substrate. Residues K201, H220, and 236–244 (GLSGTGKTT) each bind ATP. Positions 201 and 220 each coordinate Mn(2+). D257 provides a ligand contact to Mn(2+). ATP-binding positions include E285, R321, 440-441 (RI), and T446. R321 is a binding site for substrate.

The protein belongs to the phosphoenolpyruvate carboxykinase (ATP) family. It depends on Mn(2+) as a cofactor.

It localises to the cytoplasm. The enzyme catalyses oxaloacetate + ATP = phosphoenolpyruvate + ADP + CO2. The protein operates within carbohydrate biosynthesis; gluconeogenesis. In terms of biological role, involved in the gluconeogenesis. Catalyzes the conversion of oxaloacetate (OAA) to phosphoenolpyruvate (PEP) through direct phosphoryl transfer between the nucleoside triphosphate and OAA. The sequence is that of Phosphoenolpyruvate carboxykinase (ATP) from Staphylococcus aureus (strain MRSA252).